Consider the following 713-residue polypeptide: UvrABC system protein B (713 aa).

One can recognise a Helicase ATP-binding domain in the interval 35–421; sequence RRIRAGEKDV…GDGFVEQIIR (387 aa). 48 to 55 is a binding site for ATP; that stretch reads GATGTGKS. Positions 101–124 match the Beta-hairpin motif; the sequence is YYDYYQPEAYVPQSDTYIEKDSSI. The Helicase C-terminal domain occupies 438-604; the sequence is QIDDLVHEIR…PLRKKINDIV (167 aa). The tract at residues 624–663 is disordered; the sequence is QAKDGKGAKAPVPSLGGKAAAKGAKSAKGKAKETVPTDRP. Low complexity predominate over residues 639 to 649; that stretch reads GGKAAAKGAKS. The segment covering 653-663 has biased composition (basic and acidic residues); sequence KAKETVPTDRP. The UVR domain occupies 668 to 703; that stretch reads AEEIEELTNRMRAAAADLQFEIAARLRDEVSEMKKE.

Belongs to the UvrB family. As to quaternary structure, forms a heterotetramer with UvrA during the search for lesions. Interacts with UvrC in an incision complex.

It localises to the cytoplasm. The UvrABC repair system catalyzes the recognition and processing of DNA lesions. A damage recognition complex composed of 2 UvrA and 2 UvrB subunits scans DNA for abnormalities. Upon binding of the UvrA(2)B(2) complex to a putative damaged site, the DNA wraps around one UvrB monomer. DNA wrap is dependent on ATP binding by UvrB and probably causes local melting of the DNA helix, facilitating insertion of UvrB beta-hairpin between the DNA strands. Then UvrB probes one DNA strand for the presence of a lesion. If a lesion is found the UvrA subunits dissociate and the UvrB-DNA preincision complex is formed. This complex is subsequently bound by UvrC and the second UvrB is released. If no lesion is found, the DNA wraps around the other UvrB subunit that will check the other stand for damage. The sequence is that of UvrABC system protein B from Streptomyces avermitilis (strain ATCC 31267 / DSM 46492 / JCM 5070 / NBRC 14893 / NCIMB 12804 / NRRL 8165 / MA-4680).